Consider the following 37-residue polypeptide: Large ribosomal subunit protein bL36 (37 aa).

This sequence belongs to the bacterial ribosomal protein bL36 family.

This Koribacter versatilis (strain Ellin345) protein is Large ribosomal subunit protein bL36.